We begin with the raw amino-acid sequence, 204 residues long: dITP/XTP pyrophosphatase (204 aa).

8 to 13 (SRNRKK) contacts substrate. Aspartate 73 acts as the Proton acceptor in catalysis. A Mg(2+)-binding site is contributed by aspartate 73. Substrate-binding positions include serine 74, 155-158 (FGYD), lysine 179, and 184-185 (HR).

Belongs to the HAM1 NTPase family. As to quaternary structure, homodimer. Requires Mg(2+) as cofactor.

The enzyme catalyses XTP + H2O = XMP + diphosphate + H(+). It carries out the reaction dITP + H2O = dIMP + diphosphate + H(+). The catalysed reaction is ITP + H2O = IMP + diphosphate + H(+). Functionally, pyrophosphatase that catalyzes the hydrolysis of nucleoside triphosphates to their monophosphate derivatives, with a high preference for the non-canonical purine nucleotides XTP (xanthosine triphosphate), dITP (deoxyinosine triphosphate) and ITP. Seems to function as a house-cleaning enzyme that removes non-canonical purine nucleotides from the nucleotide pool, thus preventing their incorporation into DNA/RNA and avoiding chromosomal lesions. The protein is dITP/XTP pyrophosphatase of Mycolicibacterium paratuberculosis (strain ATCC BAA-968 / K-10) (Mycobacterium paratuberculosis).